We begin with the raw amino-acid sequence, 389 residues long: POU domain, class 5, transcription factor 3 (389 aa).

Low complexity-rich tracts occupy residues 1 to 18 and 145 to 165; these read MFSPDGGLPAAPFGLLPD and LANLGSSGSSSGAASEGGHSS. 2 disordered regions span residues 1–88 and 145–177; these read MFSP…APPA and LANLGSSGSSSGAASEGGHSSDSGDEDAPTSEE. The span at 167–177 shows a compositional bias: acidic residues; the sequence is SGDEDAPTSEE. Positions 170-244 constitute a POU-specific domain; the sequence is EDAPTSEELE…LLQRWLNEAE (75 aa). The segment at residues 264–323 is a DNA-binding region (homeobox); sequence KRKRRTSIETNVKGTLESFFRKCVKPSPQEISQIAEDLNLDKDVVRVWFCNRRQKGKRLL.

Belongs to the POU transcription factor family.

It localises to the nucleus. Required for the maintenance of pluripotency and self-renewal of embryonic stem cells. Transcriptional activator that binds the DNA consensus sequence 5'-ATGCAAAT-3'. The polypeptide is POU domain, class 5, transcription factor 3 (POU5F3) (Gallus gallus (Chicken)).